A 253-amino-acid chain; its full sequence is Ubiquinone/menaquinone biosynthesis C-methyltransferase UbiE (253 aa).

Residues T76, D97, 125-126, and S142 contribute to the S-adenosyl-L-methionine site; that span reads NA.

Belongs to the class I-like SAM-binding methyltransferase superfamily. MenG/UbiE family.

The catalysed reaction is a 2-demethylmenaquinol + S-adenosyl-L-methionine = a menaquinol + S-adenosyl-L-homocysteine + H(+). It catalyses the reaction a 2-methoxy-6-(all-trans-polyprenyl)benzene-1,4-diol + S-adenosyl-L-methionine = a 5-methoxy-2-methyl-3-(all-trans-polyprenyl)benzene-1,4-diol + S-adenosyl-L-homocysteine + H(+). It functions in the pathway quinol/quinone metabolism; menaquinone biosynthesis; menaquinol from 1,4-dihydroxy-2-naphthoate: step 2/2. The protein operates within cofactor biosynthesis; ubiquinone biosynthesis. Methyltransferase required for the conversion of demethylmenaquinol (DMKH2) to menaquinol (MKH2) and the conversion of 2-polyprenyl-6-methoxy-1,4-benzoquinol (DDMQH2) to 2-polyprenyl-3-methyl-6-methoxy-1,4-benzoquinol (DMQH2). In Xanthomonas campestris pv. campestris (strain ATCC 33913 / DSM 3586 / NCPPB 528 / LMG 568 / P 25), this protein is Ubiquinone/menaquinone biosynthesis C-methyltransferase UbiE.